Consider the following 351-residue polypeptide: NAD-dependent protein deacetylase SIR2rp1 (351 aa).

A Deacetylase sirtuin-type domain is found at 10-325; the sequence is HVVGEPTFEG…RSFAQALGFG (316 aa). NAD(+) is bound by residues 37-57 and 122-125; these read GAGI…TGLY and QNID. H142 functions as the Proton acceptor in the catalytic mechanism. Zn(2+)-binding residues include C150, C153, C174, and C177. Residues 213–215 and 238–240 each bind NAD(+); these read GTS and NLE. The disordered stretch occupies residues 260–284; that stretch reads SSYRLSTGNGNGSKISSGDSSNSSS. Over residues 265–284 the composition is skewed to low complexity; the sequence is STGNGNGSKISSGDSSNSSS. C311 is an NAD(+) binding site.

Belongs to the sirtuin family. Class I subfamily. Requires Zn(2+) as cofactor.

It localises to the nucleus. Its subcellular location is the chromosome. The protein resides in the telomere. The catalysed reaction is N(6)-acetyl-L-lysyl-[protein] + NAD(+) + H2O = 2''-O-acetyl-ADP-D-ribose + nicotinamide + L-lysyl-[protein]. NAD-dependent protein deacetylase, which is involved in repression of RNA polymerase I-mediated expression immediately adjacent to telomeres. It is however not involved in antigenic variation and subtelomeric variant surface glycoprotein (VSG) gene silencing. Plays a role in DNA damage response. Also has ADP-ribosylation activity in vitro. The chain is NAD-dependent protein deacetylase SIR2rp1 (SIR2rp1) from Trypanosoma brucei brucei (strain 927/4 GUTat10.1).